A 221-amino-acid chain; its full sequence is Ribosomal RNA small subunit methyltransferase G (221 aa).

Gly78, Phe83, and Arg150 together coordinate S-adenosyl-L-methionine.

It belongs to the methyltransferase superfamily. RNA methyltransferase RsmG family.

The protein localises to the cytoplasm. Specifically methylates the N7 position of a guanine in 16S rRNA. The protein is Ribosomal RNA small subunit methyltransferase G of Bifidobacterium longum (strain DJO10A).